A 231-amino-acid polypeptide reads, in one-letter code: uncharacterized protein (231 aa).

The signal sequence occupies residues 1–25; the sequence is MAKWVPALLLRRVPLFSLRFRPASS. Over 26-200 the chain is Extracellular; sequence TFLPVLAATE…SRPSPSATLT (175 aa). A disordered region spans residues 39 to 64; sequence SVPSGDLSMPVKTRAEGEDDGFGEAG. Residues 201 to 225 traverse the membrane as a helical segment; the sequence is LLLASSCLLAPAPPSFILLLFTLIA. Residues 226-231 are Cytoplasmic-facing; that stretch reads PDLPHS.

It localises to the membrane. This is an uncharacterized protein from Homo sapiens (Human).